We begin with the raw amino-acid sequence, 144 residues long: Putative pre-16S rRNA nuclease (144 aa).

Belongs to the YqgF nuclease family.

Its subcellular location is the cytoplasm. In terms of biological role, could be a nuclease involved in processing of the 5'-end of pre-16S rRNA. This Lactiplantibacillus plantarum (strain ATCC BAA-793 / NCIMB 8826 / WCFS1) (Lactobacillus plantarum) protein is Putative pre-16S rRNA nuclease.